The chain runs to 189 residues: Movement protein (189 aa).

Belongs to the tombusvirus/aureusvirus movement protein p22 family. As to quaternary structure, interacts with host protein HFI22. In terms of processing, phosphorylated.

The protein localises to the host membrane. Transports viral genome to neighboring plant cells directly through plasmosdesmata, without any budding. The movement protein allows efficient cell to cell propagation, by bypassing the host cell wall barrier. Displays RNA-binding activity. This chain is Movement protein, found in Capsicum annuum (Capsicum pepper).